Consider the following 438-residue polypeptide: 3-phosphoshikimate 1-carboxyvinyltransferase (438 aa).

Residues Lys21, Ser22, and Arg26 each coordinate 3-phosphoshikimate. Lys21 contacts phosphoenolpyruvate. Residues Gly93 and Arg121 each coordinate phosphoenolpyruvate. 3-phosphoshikimate contacts are provided by Ser166, Ser167, Gln168, Ser194, Asp324, and Lys351. Position 168 (Gln168) interacts with phosphoenolpyruvate. Asp324 serves as the catalytic Proton acceptor. Positions 355 and 395 each coordinate phosphoenolpyruvate.

This sequence belongs to the EPSP synthase family. Monomer.

It is found in the cytoplasm. The catalysed reaction is 3-phosphoshikimate + phosphoenolpyruvate = 5-O-(1-carboxyvinyl)-3-phosphoshikimate + phosphate. It functions in the pathway metabolic intermediate biosynthesis; chorismate biosynthesis. Functionally, catalyzes the transfer of the enolpyruvyl moiety of phosphoenolpyruvate (PEP) to the 5-hydroxyl of shikimate-3-phosphate (S3P) to produce enolpyruvyl shikimate-3-phosphate and inorganic phosphate. This is 3-phosphoshikimate 1-carboxyvinyltransferase from Methanobrevibacter smithii (strain ATCC 35061 / DSM 861 / OCM 144 / PS).